A 387-amino-acid polypeptide reads, in one-letter code: Eukaryotic translation initiation factor 3 subunit M (387 aa).

In terms of domain architecture, PCI spans 181–340 (LSSKVMIELL…QKVHISSTMH (160 aa)).

The protein belongs to the eIF-3 subunit M family. As to quaternary structure, component of the eukaryotic translation initiation factor 3 (eIF-3) complex. The eIF-3 complex interacts with pix.

It localises to the cytoplasm. Its subcellular location is the golgi apparatus. Component of the eukaryotic translation initiation factor 3 (eIF-3) complex, which is involved in protein synthesis of a specialized repertoire of mRNAs and, together with other initiation factors, stimulates binding of mRNA and methionyl-tRNAi to the 40S ribosome. The eIF-3 complex specifically targets and initiates translation of a subset of mRNAs involved in cell proliferation. This chain is Eukaryotic translation initiation factor 3 subunit M, found in Drosophila sechellia (Fruit fly).